The primary structure comprises 92 residues: Acylphosphatase (92 aa).

The Acylphosphatase-like domain occupies 5 to 92 (ATAAYVYGVV…TDYKGFTIRY (88 aa)). Active-site residues include arginine 20 and asparagine 38.

Belongs to the acylphosphatase family.

The catalysed reaction is an acyl phosphate + H2O = a carboxylate + phosphate + H(+). In Pectobacterium atrosepticum (strain SCRI 1043 / ATCC BAA-672) (Erwinia carotovora subsp. atroseptica), this protein is Acylphosphatase (acyP).